A 437-amino-acid polypeptide reads, in one-letter code: F-box protein At3g62430 (437 aa).

One can recognise an F-box domain in the interval 1 to 49; the sequence is MDRISNLPDGVIYRVISLLSTKEATCLKYTSKNWLNLVTIIPIAVFVDS.

The sequence is that of F-box protein At3g62430 from Arabidopsis thaliana (Mouse-ear cress).